A 63-amino-acid chain; its full sequence is Race-specific elicitor A9 (63 aa).

The first 23 residues, 1–23, serve as a signal peptide directing secretion; sequence MKLSLLSVELALLIATTLPLCWA. A propeptide spanning residues 24 to 35 is cleaved from the precursor; sequence AALPVGLGVGLD. Intrachain disulfides connect C37–C51, C41–C54, and C47–C61.

Its function is as follows. This necrosis-inducing peptide induces a hypersensitive response on Cf-9 tomato genotypes. Race-specific elicitors are compounds which only induce defense responses in genotypes of host plants which are resistant to the pathogenic race that produces the elicitor, but not in susceptible genotypes. The sequence is that of Race-specific elicitor A9 (AVR9) from Passalora fulva (Tomato leaf mold).